A 158-amino-acid chain; its full sequence is Putative tyrosine-protein phosphatase OCA1 (158 aa).

The Tyrosine-protein phosphatase domain maps to 7-158 (NYGMVEENFY…DEELVFGASY (152 aa)). Cysteine 99 serves as the catalytic Phosphocysteine intermediate.

It belongs to the protein-tyrosine phosphatase family.

It localises to the cytoplasm. It carries out the reaction O-phospho-L-tyrosyl-[protein] + H2O = L-tyrosyl-[protein] + phosphate. In terms of biological role, putative tyrosine-protein phosphatase required for protection against superoxide stress. This chain is Putative tyrosine-protein phosphatase OCA1 (OCA1), found in Mycosarcoma maydis (Corn smut fungus).